A 74-amino-acid chain; its full sequence is Large ribosomal subunit protein bL31 (74 aa).

4 residues coordinate Zn(2+): Cys-16, Cys-18, Cys-38, and Cys-41.

It belongs to the bacterial ribosomal protein bL31 family. Type A subfamily. In terms of assembly, part of the 50S ribosomal subunit. Requires Zn(2+) as cofactor.

In terms of biological role, binds the 23S rRNA. This Streptomyces griseus subsp. griseus (strain JCM 4626 / CBS 651.72 / NBRC 13350 / KCC S-0626 / ISP 5235) protein is Large ribosomal subunit protein bL31.